The following is a 562-amino-acid chain: MASLQCSFHFLGTNPKKYNPSSIFQSYSRTSFTKLSSRVSRQRFLRCTLSMNGCEADHKAPLGTVETRTLSTVPSPAAATERLITAVSDLKSQPPPFSSGIVRLQVPIEQKIGAIDWLHAQNEILPRSFFSRRSDSGRPDLLQDFSSDNGSSDHNPVSVAGIGSAVFFRDLDPFSHDDWRSIRRFLSSKSPLIRAYGGLRFDPTGKIAVEWEHFGSFYFTVPQVEFDEFGGSSMLAATVAWDNELSWTLENAIEALQETMLQVSSVIMRLRRESLGVIVVSKNHVPSEGAYYPAVNNALEIIKDKHSPLSKVVLARSSRIITDTDIDPIAWLARLQCEGQDAYQFCLQPPGAPAFIGNTPERLFHRKHLGVCSEALAATRPRGDSKVREMEIERDLLTSPKDDLEFSIVRENIREKLKTICDRVVVKPHKSVRKLARVQHLYSQLAGQLKREDDEFNILTALHPTPAVCGCPVEEARLLIKQIESFDRGMYAGPIGFFGGGESEFSVGIRSALVEKGLGALIYAGTGIVSGSNPSSEWNELELKISQFTKSLEHESALQPIN.

The N-terminal 55 residues, 1-55, are a transit peptide targeting the chloroplast; sequence MASLQCSFHFLGTNPKKYNPSSIFQSYSRTSFTKLSSRVSRQRFLRCTLSMNGCE.

Belongs to the isochorismate synthase family. Requires Mg(2+) as cofactor.

It is found in the plastid. Its subcellular location is the chloroplast. The enzyme catalyses chorismate = isochorismate. The protein operates within siderophore biosynthesis; salicylate biosynthesis. Isochorismate synthase involved in the synthesis of salicylic acid (SA) required for both local and systemic acquired resistance (LAR and SAR) while SA synthesized through the phenylalanine ammonium lyase (PAL) pathway seems to potentiate plant cell death. Also involved in phylloquinone (vitamin K1) synthesis. Has no isochorismate pyruvate lyase (IPL) activity. The sequence is that of Isochorismate synthase 2, chloroplastic (ICS2) from Arabidopsis thaliana (Mouse-ear cress).